Here is a 265-residue protein sequence, read N- to C-terminus: Cell adhesion molecule CEACAM7 (265 aa).

The N-terminal stretch at 1–35 is a signal peptide; it reads MGSPSACPYRVCIPWQGLLLTASLLTFWNLPNSAQ. One can recognise an Ig-like V-type domain in the interval 36–142; that stretch reads TNIDVVPFNV…EEVTRQFYVF (107 aa). Residues N57, N85, N105, N112, N174, N183, and N198 are each glycosylated (N-linked (GlcNAc...) asparagine). In terms of domain architecture, Ig-like C2-type spans 146–233; the sequence is PKPSITSNNF…ASRSDPVTLN (88 aa). An intrachain disulfide couples C168 to C216. The GPI-anchor amidated serine moiety is linked to residue S242. Residues 243 to 265 constitute a propeptide, removed in mature form; sequence SPDLSAGTAVSIMIGVLAGMALI.

Belongs to the immunoglobulin superfamily. CEA family. In terms of assembly, homodimer. Expressed in columnar epithelial cells of the colon (at protein level). Strongly down-regulated in colonic adenocarcinomas.

It localises to the cell membrane. The protein resides in the apical cell membrane. The protein is Cell adhesion molecule CEACAM7 of Homo sapiens (Human).